Here is a 142-residue protein sequence, read N- to C-terminus: uncharacterized protein (142 aa).

This is an uncharacterized protein from Bacillus anthracis.